The following is a 244-amino-acid chain: Glucosamine-6-phosphate deaminase (244 aa).

The Proton acceptor; for enolization step role is filled by Asp-67. The active-site For ring-opening step is Asn-136. Residue His-138 is the Proton acceptor; for ring-opening step of the active site. The active-site For ring-opening step is Glu-143.

It belongs to the glucosamine/galactosamine-6-phosphate isomerase family. NagB subfamily.

The enzyme catalyses alpha-D-glucosamine 6-phosphate + H2O = beta-D-fructose 6-phosphate + NH4(+). It participates in amino-sugar metabolism; N-acetylneuraminate degradation; D-fructose 6-phosphate from N-acetylneuraminate: step 5/5. Functionally, catalyzes the reversible isomerization-deamination of glucosamine 6-phosphate (GlcN6P) to form fructose 6-phosphate (Fru6P) and ammonium ion. This is Glucosamine-6-phosphate deaminase from Clostridium botulinum (strain Loch Maree / Type A3).